The sequence spans 398 residues: Circumsporozoite protein (398 aa).

The first 23 residues, 1-23, serve as a signal peptide directing secretion; it reads MKNFNLLAVSSILLVDLFRTQWG. Positions 50-110 are disordered; that stretch reads AQVRQSASRG…AAAGEAGNNA (61 aa). Residues 66 to 93 show a composition bias toward basic and acidic residues; sequence PKNEEGADKPKKKDEKQVEPKKPRENKL. Residues 81 to 89 form a required for the binding to heparan sulfate proteoglycans (HSPGs) on the surface of host hepatocytes region; sequence KQVEPKKPR. The segment at 92-96 is region I; contains the proteolytic cleavage site; the sequence is KLKQP. Repeat copies occupy residues 97 to 105, 106 to 114, 115 to 123, 124 to 132, 133 to 141, 142 to 150, 151 to 159, 160 to 168, 169 to 177, 178 to 186, 187 to 195, 196 to 204, 205 to 213, 214 to 222, 223 to 231, 232 to 240, 241 to 257, 258 to 274, and 275 to 291. The span at 97-110 shows a compositional bias: low complexity; that stretch reads AGNNAAAGEAGNNA. A 16 X 9 AA tandem repeats of A-G-N-N-A-A-[AG]-G-[EA] region spans residues 97-240; it reads AGNNAAAGEA…AAGNNAAAGA (144 aa). Residues 241–291 form a 3 X 17 AA tandem repeats of A-G-N-N-A-A-A-G-E-A-G-A-G-G-A-G-[RG] region; that stretch reads AGNNAAAGEAGAGGAGRAGNNAAAGEAGAGGAGRAGNNAAAGEAGAGGAGG. The segment at 248–310 is disordered; sequence GEAGAGGAGR…AGQGQNNGGA (63 aa). A compositionally biased stretch (gly residues) spans 284–293; the sequence is AGAGGAGGNA. Residues 324–376 form the TSP type-1 domain; the sequence is KIRSTIGVEWSPCSVTCGKGVRMRRKVNAANKKPEELDANDLETEVCTMDKCA. 2 disulfides stabilise this stretch: C336-C370 and C340-C375. An O-linked (Fuc) threonine glycan is attached at T339. Residue C375 is the site of GPI-anchor amidated cysteine attachment. A propeptide spans 376–398 (removed in mature form); the sequence is AGIFNVVSNSLGLVILLVLALFN.

Belongs to the plasmodium circumsporozoite protein family. Post-translationally, during host cell invasion, proteolytically cleaved at the cell membrane in the region I by a papain-like cysteine protease of parasite origin. Cleavage is triggered by the sporozoite contact with highly sulfated heparan sulfate proteoglycans (HSPGs) present on the host hepatocyte cell surface. Cleavage exposes the TSP type-1 (TSR) domain and is required for productive invasion of host hepatocytes but not for adhesion to the host cell membrane. Cleavage is dispensable for sporozoite development in the oocyst, motility and for traversal of host and vector cells. O-glycosylated; maybe by POFUT2.

It is found in the cell membrane. It localises to the cytoplasm. Its function is as follows. Essential sporozoite protein. In the mosquito vector, required for sporozoite development in the oocyst, migration through the vector hemolymph and entry into the vector salivary glands. In the vertebrate host, required for sporozoite migration through the host dermis and infection of host hepatocytes. Binds to highly sulfated heparan sulfate proteoglycans (HSPGs) on the surface of host hepatocytes. In terms of biological role, in the vertebrate host, binds to highly sulfated heparan sulfate proteoglycans (HSPGs) on the surface of host hepatocytes and is required for sporozoite invasion of the host hepatocytes. In Plasmodium cynomolgi (strain Ceylon), this protein is Circumsporozoite protein.